The sequence spans 751 residues: Serine/threonine-protein kinase-like protein CCR4 (751 aa).

The N-terminal stretch at 1–31 (MALTISISCFSSYFVSLLLLVLSSFSFVCFS) is a signal peptide. Residues 32–366 (LSTVSISHIS…NKTWSRRNIA (335 aa)) are Extracellular-facing. N-linked (GlcNAc...) asparagine glycans are attached at residues asparagine 42, asparagine 51, asparagine 98, asparagine 243, asparagine 254, asparagine 283, and asparagine 357. Residues 367 to 387 (FLVVGCVGTFSLLLVISFLIF) traverse the membrane as a helical segment. The Cytoplasmic portion of the chain corresponds to 388-751 (KSHCRCRVHD…TETVSRSNTY (364 aa)). Residues 443–733 (FSVRFHLGIG…EVVSKLESAL (291 aa)) enclose the Protein kinase domain. Residues 449 to 457 (LGIGSFGSV) and lysine 471 each bind ATP. The Proton acceptor role is filled by aspartate 579.

This sequence belongs to the protein kinase superfamily. Ser/Thr protein kinase family. In terms of assembly, homodimer. In terms of tissue distribution, expressed in roots, leaves, especially in trichomes, shoot apical meristems (SAM), and, to a lower extent, in floral buds.

It localises to the membrane. It catalyses the reaction L-seryl-[protein] + ATP = O-phospho-L-seryl-[protein] + ADP + H(+). It carries out the reaction L-threonyl-[protein] + ATP = O-phospho-L-threonyl-[protein] + ADP + H(+). The polypeptide is Serine/threonine-protein kinase-like protein CCR4 (CCR4) (Arabidopsis thaliana (Mouse-ear cress)).